Consider the following 666-residue polypeptide: Fructose-1,6-bisphosphatase class 3 (666 aa).

It belongs to the FBPase class 3 family. The cofactor is Mn(2+).

It catalyses the reaction beta-D-fructose 1,6-bisphosphate + H2O = beta-D-fructose 6-phosphate + phosphate. The protein operates within carbohydrate biosynthesis; gluconeogenesis. The polypeptide is Fructose-1,6-bisphosphatase class 3 (Parabacteroides distasonis (strain ATCC 8503 / DSM 20701 / CIP 104284 / JCM 5825 / NCTC 11152)).